Reading from the N-terminus, the 404-residue chain is Cysteine desulfurase IscS (404 aa).

Pyridoxal 5'-phosphate is bound by residues 85–86 (GT), asparagine 165, glutamine 193, 213–215 (SGH), and threonine 251. Cysteine 338 functions as the Cysteine persulfide intermediate in the catalytic mechanism. Cysteine 338 contributes to the [2Fe-2S] cluster binding site.

Belongs to the class-V pyridoxal-phosphate-dependent aminotransferase family. NifS/IscS subfamily. Homodimer. Forms a heterotetramer with IscU, interacts with other sulfur acceptors. The cofactor is pyridoxal 5'-phosphate.

Its subcellular location is the cytoplasm. The catalysed reaction is (sulfur carrier)-H + L-cysteine = (sulfur carrier)-SH + L-alanine. It functions in the pathway cofactor biosynthesis; iron-sulfur cluster biosynthesis. Its function is as follows. Master enzyme that delivers sulfur to a number of partners involved in Fe-S cluster assembly, tRNA modification or cofactor biosynthesis. Catalyzes the removal of elemental sulfur atoms from cysteine to produce alanine. Functions as a sulfur delivery protein for Fe-S cluster synthesis onto IscU, an Fe-S scaffold assembly protein, as well as other S acceptor proteins. This is Cysteine desulfurase IscS from Methanosarcina thermophila.